Consider the following 572-residue polypeptide: Terminal nucleotidyltransferase 4B (572 aa).

The disordered stretch occupies residues 1–105 (MYRSGERLLG…ADGGGVVYSG (105 aa)). The segment covering 25–34 (ETTNNNNNHH) has biased composition (polar residues). A compositionally biased stretch (low complexity) spans 36 to 76 (PGAWARRAGSSASSPPSASSSPHPSAAVPAADPADSASGSS). Residues 89–102 (RAAGGGRADGGGVV) are compositionally biased toward gly residues. Val151 is covalently cross-linked (Glycyl lysine isopeptide (Lys-Gly) (interchain with G-Cter in SUMO2)). Asp177 and Asp179 together coordinate Mg(2+). ATP-binding residues include Gly240, Lys265, Ser283, Tyr284, Asn368, and Arg372. Positions 308–368 (NYGVLLIEFF…YIEDPLQPGN (61 aa)) constitute a PAP-associated domain. The segment at 435–572 (KNRPEPSCNG…RDAPLSDLCR (138 aa)) is disordered. Over residues 446–464 (VSSSSATQSSSSDVDSDAT) the composition is skewed to low complexity. Residue Lys470 forms a Glycyl lysine isopeptide (Lys-Gly) (interchain with G-Cter in SUMO2) linkage. The segment covering 477-494 (STGNRVGSQDVSLESSQA) has biased composition (polar residues). A Phosphoserine modification is found at Ser484. Residues Lys497, Lys512, and Lys526 each participate in a glycyl lysine isopeptide (Lys-Gly) (interchain with G-Cter in SUMO2) cross-link. The span at 499 to 514 (QSTQTTNTSNSTNKSQ) shows a compositional bias: low complexity. Polar residues predominate over residues 522 to 553 (RSSSKGFQGTTQTSHGSLMTNKQHQGKSNNQY). The short motif at 557 to 563 (KKRKHKR) is the Basic, involved in binding of the RNA primer element.

It belongs to the DNA polymerase type-B-like family. In terms of assembly, component of a nucleolar TRAMP-like complex, an ATP-dependent exosome regulatory complex consisting of a helicase (MTREX), an oligadenylate polymerase (TENT4B or TENT4A), and a substrate specific RNA-binding factor (ZCCHC7 or ZCCHC8). Several TRAMP-like complexes exist with specific compositions and are associated with nuclear, or nucleolar RNA exosomes. Interacts with CPEB1; the interaction is required for TENT4B-mediated translational control. Mg(2+) serves as cofactor. Mn(2+) is required as a cofactor.

It is found in the nucleus. The protein resides in the nucleolus. It localises to the cytoplasm. It carries out the reaction RNA(n) + ATP = RNA(n)-3'-adenine ribonucleotide + diphosphate. Functionally, terminal nucleotidyltransferase that catalyzes preferentially the transfer of ATP and GTP on RNA 3' poly(A) tail creating a heterogeneous 3' poly(A) tail leading to mRNAs stabilization by protecting mRNAs from active deadenylation. Also functions as a catalytic subunit of a TRAMP-like complex which has a poly(A) RNA polymerase activity and is involved in a post-transcriptional quality control mechanism. Polyadenylation with short oligo(A) tails is required for the degradative activity of the exosome on several of its nuclear RNA substrates. Doesn't need a cofactor for polyadenylation activity (in vitro). Required for cytoplasmic polyadenylation of mRNAs involved in carbohydrate metabolism, including the glucose transporter SLC2A1/GLUT1. Plays a role in replication-dependent histone mRNA degradation, probably through terminal uridylation of mature histone mRNAs. May play a role in sister chromatid cohesion. Mediates 3' adenylation of the microRNA MIR21 followed by its 3'-to-5' trimming by the exoribonuclease PARN leading to degradation. Mediates 3' adenylation of H/ACA box snoRNAs (small nucleolar RNAs) followed by its 3'-to-5' trimming by the exoribonuclease PARN which enhances snoRNA stability and maturation. The polypeptide is Terminal nucleotidyltransferase 4B (Homo sapiens (Human)).